The following is a 219-amino-acid chain: Ribosomal RNA small subunit methyltransferase Nep1 (219 aa).

S-adenosyl-L-methionine-binding positions include Gly-178, Gly-183, and 196-201 (LYKAPL).

This sequence belongs to the class IV-like SAM-binding methyltransferase superfamily. RNA methyltransferase NEP1 family. Homodimer.

It catalyses the reaction a pseudouridine in rRNA + S-adenosyl-L-methionine = an N(1)-methylpseudouridine in rRNA + S-adenosyl-L-homocysteine + H(+). Methyltransferase involved in ribosomal biogenesis. Specifically catalyzes the N1-methylation of the pseudouridine corresponding to position 914 in M.jannaschii 16S rRNA. The polypeptide is Ribosomal RNA small subunit methyltransferase Nep1 (Thermococcus onnurineus (strain NA1)).